The chain runs to 253 residues: Tyrosine recombinase XerD-like (253 aa).

In terms of domain architecture, Core-binding (CB) spans 8–81; that stretch reads KQLTTQITNF…AVNQFLLYLY (74 aa). The Tyr recombinase domain maps to 93-253; the sequence is SETAPLPSQQ…PVTLEKYYKT (161 aa). Residues K157 and R218 contribute to the active site. Y250 acts as the O-(3'-phospho-DNA)-tyrosine intermediate in catalysis.

The protein belongs to the 'phage' integrase family. XerD-like subfamily.

The protein localises to the cytoplasm. In terms of biological role, putative tyrosine recombinase. Not involved in the cutting and rejoining of the recombining DNA molecules on dif(SL) site. The protein is Tyrosine recombinase XerD-like of Streptococcus thermophilus (strain CNRZ 1066).